The primary structure comprises 449 residues: Tubulin alpha-1C chain (449 aa).

An MREC motif motif is present at residues 1 to 4; that stretch reads MREC. Q11 is a binding site for GTP. The residue at position 40 (K40) is an N6-acetyllysine. GTP is bound by residues E71, S140, G144, T145, T179, N206, and N228. E71 contacts Mg(2+). E254 is a catalytic residue. At Y282 the chain carries 3'-nitrotyrosine. Residues 429-449 form a disordered region; that stretch reads EKDYEEVGADSADGEDEGEEY. The segment covering 431 to 449 has biased composition (acidic residues); it reads DYEEVGADSADGEDEGEEY. Y432 carries the phosphotyrosine modification. Position 439 is a phosphoserine (S439). A 3'-nitrotyrosine modification is found at Y449.

It belongs to the tubulin family. As to quaternary structure, dimer of alpha and beta chains. A typical microtubule is a hollow water-filled tube with an outer diameter of 25 nm and an inner diameter of 15 nM. Alpha-beta heterodimers associate head-to-tail to form protofilaments running lengthwise along the microtubule wall with the beta-tubulin subunit facing the microtubule plus end conferring a structural polarity. Microtubules usually have 13 protofilaments but different protofilament numbers can be found in some organisms and specialized cells. Requires Mg(2+) as cofactor. Some glutamate residues at the C-terminus are polyglutamylated, resulting in polyglutamate chains on the gamma-carboxyl group. Polyglutamylation plays a key role in microtubule severing by spastin (SPAST). SPAST preferentially recognizes and acts on microtubules decorated with short polyglutamate tails: severing activity by SPAST increases as the number of glutamates per tubulin rises from one to eight, but decreases beyond this glutamylation threshold. Glutamylation is also involved in cilia motility. Post-translationally, some glutamate residues at the C-terminus are monoglycylated but not polyglycylated due to the absence of functional TTLL10 in human. Monoglycylation is mainly limited to tubulin incorporated into cilia and flagella axonemes, which is required for their stability and maintenance. Flagella glycylation controls sperm motility. Both polyglutamylation and monoglycylation can coexist on the same protein on adjacent residues, and lowering glycylation levels increases polyglutamylation, and reciprocally. In terms of processing, acetylation of alpha chains at Lys-40 is located inside the microtubule lumen. This modification has been correlated with increased microtubule stability, intracellular transport and ciliary assembly. Methylation of alpha chains at Lys-40 is found in mitotic microtubules and is required for normal mitosis and cytokinesis contributing to genomic stability. Post-translationally, nitration of Tyr-449 is irreversible and interferes with normal dynein intracellular distribution. In terms of processing, undergoes a tyrosination/detyrosination cycle, the cyclic removal and re-addition of a C-terminal tyrosine residue by the enzymes tubulin tyrosine carboxypeptidase (MATCAP1/KIAA0895L, VASH1 or VASH2) and tubulin tyrosine ligase (TTL), respectively. Tyrosination promotes microtubule interaction with CAP-Gly domain-containing proteins such as CLIP1, CLIP2 and DCTN1. Tyrosination regulates the initiation of dynein-dynactin motility via interaction with DCTN1, which brings the dynein-dynactin complex into contact with microtubules. In neurons, tyrosinated tubulins mediate the initiation of retrograde vesicle transport. Post-translationally, detyrosination is involved in metaphase plate congression by guiding chromosomes during mitosis: detyrosination promotes interaction with CENPE, promoting pole-proximal transport of chromosomes toward the equator. Detyrosination increases microtubules-dependent mechanotransduction in dystrophic cardiac and skeletal muscle. In cardiomyocytes, detyrosinated microtubules are required to resist to contractile compression during contraction: detyrosination promotes association with desmin (DES) at force-generating sarcomeres, leading to buckled microtubules and mechanical resistance to contraction.

The protein resides in the cytoplasm. Its subcellular location is the cytoskeleton. It carries out the reaction GTP + H2O = GDP + phosphate + H(+). In terms of biological role, tubulin is the major constituent of microtubules, a cylinder consisting of laterally associated linear protofilaments composed of alpha- and beta-tubulin heterodimers. Microtubules grow by the addition of GTP-tubulin dimers to the microtubule end, where a stabilizing cap forms. Below the cap, tubulin dimers are in GDP-bound state, owing to GTPase activity of alpha-tubulin. The chain is Tubulin alpha-1C chain (TUBA1C) from Homo sapiens (Human).